We begin with the raw amino-acid sequence, 207 residues long: Large ribosomal subunit protein uL4 (207 aa).

It belongs to the universal ribosomal protein uL4 family. Part of the 50S ribosomal subunit.

One of the primary rRNA binding proteins, this protein initially binds near the 5'-end of the 23S rRNA. It is important during the early stages of 50S assembly. It makes multiple contacts with different domains of the 23S rRNA in the assembled 50S subunit and ribosome. Its function is as follows. Forms part of the polypeptide exit tunnel. This chain is Large ribosomal subunit protein uL4, found in Geobacter metallireducens (strain ATCC 53774 / DSM 7210 / GS-15).